Here is a 357-residue protein sequence, read N- to C-terminus: sn-glycerol-3-phosphate import ATP-binding protein UgpC (357 aa).

An ABC transporter domain is found at 4-235; sequence LKLQAVTKSY…PASLFVASFI (232 aa). 37 to 44 serves as a coordination point for ATP; that stretch reads GPSGCGKS.

Belongs to the ABC transporter superfamily. sn-glycerol-3-phosphate importer (TC 3.A.1.1.3) family. The complex is composed of two ATP-binding proteins (UgpC), two transmembrane proteins (UgpA and UgpE) and a solute-binding protein (UgpB).

The protein resides in the cell inner membrane. It catalyses the reaction sn-glycerol 3-phosphate(out) + ATP + H2O = sn-glycerol 3-phosphate(in) + ADP + phosphate + H(+). Functionally, part of the ABC transporter complex UgpBAEC involved in sn-glycerol-3-phosphate (G3P) import. Responsible for energy coupling to the transport system. The sequence is that of sn-glycerol-3-phosphate import ATP-binding protein UgpC from Yersinia pestis bv. Antiqua (strain Antiqua).